Consider the following 177-residue polypeptide: Large ribosomal subunit protein uL6 (177 aa).

This sequence belongs to the universal ribosomal protein uL6 family. Part of the 50S ribosomal subunit.

Functionally, this protein binds to the 23S rRNA, and is important in its secondary structure. It is located near the subunit interface in the base of the L7/L12 stalk, and near the tRNA binding site of the peptidyltransferase center. The polypeptide is Large ribosomal subunit protein uL6 (Actinobacillus pleuropneumoniae serotype 5b (strain L20)).